The sequence spans 255 residues: MQVILAVIVWMASSVSSSSFTASTLPDITNEDFIKECVQVHNQLRSKVSPPARNMLYMSWDPKLAQIAKAWTKSCEFKHNPQLHSRIHPNFTALGENIWLGSLSIFSVSSAISAWYEEIKHYDFSTRKCRHVCGHYTQVVWADSYKLGCAVQLCPNGANFICDYGPAGNYPTWPYKQGATCSDCPKDDKCLNSLCINPRRDQVSRYYSVDYPDWPIYLRNRYTSLFLIAKSVLLLLSVIITIWVKHKYPNLVLLD.

A signal peptide spans methionine 1–serine 17. The 126-residue stretch at glutamine 39 to tyrosine 164 folds into the SCP domain. Residues serine 224–valine 244 form a helical membrane-spanning segment.

This sequence belongs to the CRISP family.

Its subcellular location is the membrane. This Mus musculus (Mouse) protein is Glioma pathogenesis-related protein 1 (Glipr1).